A 509-amino-acid chain; its full sequence is MEEIQRYLQPDRSQQHNFLYPLIFQEYIYALAHDHGLNRNRSILLENPGYNNKLSFLIVKRLITRMYQQNHFLISTNDSNKNSFLGCNKSLYSQMISEGFAFIVEIPFSLRLISSLSSFEGKKIFKSHNLQSIHSTFPFLEDNFSHLNYVLDILIPYPVHLEILVQTLRYWVKDASSLHLLRFFLHEYWNLNSLITSKKPGYSFSKKNQRFFFFLYNSYVYECESTFVFLRNQSSHLRSTSFGALLERIYFYGKIERLVEVFAKDFQVTLWLFKDPFMHYVRYQGKSILASKGTFLLMNKWKFYLVNFWQCHFSLCFHTGRIHINQLSNHSRDFMGYLSSVRLNPSMVRSQMLENSFLINNAIKKFDTLVPIIPLIGSLAKANFCTVLGHPISKPVWSDLSDSDIIDRFGRICRNLFHYYSGSSKKKTLYRIKYILRLSCARTLARKHKSTVRTFLKRSGSELLEEFLTSEEQVLSLTFPRASSSLWGVYRSRIWYLDIFCINDLANYQ.

The protein belongs to the intron maturase 2 family. MatK subfamily.

It localises to the plastid. The protein localises to the chloroplast. Usually encoded in the trnK tRNA gene intron. Probably assists in splicing its own and other chloroplast group II introns. This Nicotiana alata (Winged tobacco) protein is Maturase K.